The sequence spans 417 residues: Exodeoxyribonuclease 7 large subunit (417 aa).

This sequence belongs to the XseA family. Heterooligomer composed of large and small subunits.

Its subcellular location is the cytoplasm. It catalyses the reaction Exonucleolytic cleavage in either 5'- to 3'- or 3'- to 5'-direction to yield nucleoside 5'-phosphates.. Bidirectionally degrades single-stranded DNA into large acid-insoluble oligonucleotides, which are then degraded further into small acid-soluble oligonucleotides. This Lactococcus lactis subsp. lactis (strain IL1403) (Streptococcus lactis) protein is Exodeoxyribonuclease 7 large subunit.